We begin with the raw amino-acid sequence, 585 residues long: Cyclic nucleotide-binding domain-containing protein 2 (585 aa).

116-239 (SYRNYAEPLQ…DAQYRFEFFR (124 aa)) contacts a nucleoside 3',5'-cyclic phosphate.

Its subcellular location is the cytoplasm. It is found in the cytosol. Its function is as follows. Essential for male fertility. Plays an important role in spermatogenesis and regulates sperm motility by controlling the development of the flagellar bending of sperm. This chain is Cyclic nucleotide-binding domain-containing protein 2 (CNBD2), found in Macaca fascicularis (Crab-eating macaque).